Reading from the N-terminus, the 238-residue chain is Ribonuclease PH (238 aa).

Residues Arg-86 and 124-126 (GTR) each bind phosphate.

It belongs to the RNase PH family. As to quaternary structure, homohexameric ring arranged as a trimer of dimers.

The catalysed reaction is tRNA(n+1) + phosphate = tRNA(n) + a ribonucleoside 5'-diphosphate. Its function is as follows. Phosphorolytic 3'-5' exoribonuclease that plays an important role in tRNA 3'-end maturation. Removes nucleotide residues following the 3'-CCA terminus of tRNAs; can also add nucleotides to the ends of RNA molecules by using nucleoside diphosphates as substrates, but this may not be physiologically important. Probably plays a role in initiation of 16S rRNA degradation (leading to ribosome degradation) during starvation. This chain is Ribonuclease PH, found in Trichlorobacter lovleyi (strain ATCC BAA-1151 / DSM 17278 / SZ) (Geobacter lovleyi).